Reading from the N-terminus, the 55-residue chain is uncharacterized protein (55 aa).

The tract at residues 1-30 (MDKPTVETSAAPVETLVLTEPPAETQAEDS) is disordered.

This is an uncharacterized protein from Frog virus 3 (isolate Goorha) (FV-3).